The following is a 393-amino-acid chain: Chorismate synthase (393 aa).

The NADP(+) site is built by arginine 40 and arginine 46. Residues 129–131, 251–252, glycine 301, 316–320, and arginine 342 each bind FMN; these read RAS, QA, and KPIST.

This sequence belongs to the chorismate synthase family. Homotetramer. It depends on FMNH2 as a cofactor.

It catalyses the reaction 5-O-(1-carboxyvinyl)-3-phosphoshikimate = chorismate + phosphate. It participates in metabolic intermediate biosynthesis; chorismate biosynthesis; chorismate from D-erythrose 4-phosphate and phosphoenolpyruvate: step 7/7. In terms of biological role, catalyzes the anti-1,4-elimination of the C-3 phosphate and the C-6 proR hydrogen from 5-enolpyruvylshikimate-3-phosphate (EPSP) to yield chorismate, which is the branch point compound that serves as the starting substrate for the three terminal pathways of aromatic amino acid biosynthesis. This reaction introduces a second double bond into the aromatic ring system. In Koribacter versatilis (strain Ellin345), this protein is Chorismate synthase.